We begin with the raw amino-acid sequence, 459 residues long: Glycosyl hydrolase family 109 protein (459 aa).

The tat-type signal signal peptide spans 1–31 (MHNIHRRHFLKAAGAVTAGLITANITASTHA). NAD(+)-binding positions include 64 to 65 (ER), Asp86, 135 to 138 (WEWH), 155 to 156 (EV), and Asn184. Substrate contacts are provided by residues Tyr213, Arg232, 244 to 247 (YPTH), and Tyr326. Tyr244 provides a ligand contact to NAD(+).

The protein belongs to the Gfo/Idh/MocA family. Glycosyl hydrolase 109 subfamily. The cofactor is NAD(+). Predicted to be exported by the Tat system. The position of the signal peptide cleavage has not been experimentally proven.

Its function is as follows. Glycosidase. This is Glycosyl hydrolase family 109 protein from Shewanella sp. (strain W3-18-1).